The following is a 56-amino-acid chain: Ribosome biogenesis protein Nop10 (56 aa).

The protein belongs to the NOP10 family.

Functionally, involved in ribosome biogenesis; more specifically in 18S rRNA pseudouridylation and in cleavage of pre-rRNA. The sequence is that of Ribosome biogenesis protein Nop10 from Saccharolobus islandicus (strain Y.N.15.51 / Yellowstone #2) (Sulfolobus islandicus).